The primary structure comprises 295 residues: Acetylglutamate kinase (295 aa).

Substrate contacts are provided by residues 66–67 (GG), R88, and N193.

This sequence belongs to the acetylglutamate kinase family. ArgB subfamily.

It is found in the cytoplasm. It catalyses the reaction N-acetyl-L-glutamate + ATP = N-acetyl-L-glutamyl 5-phosphate + ADP. It participates in amino-acid biosynthesis; L-arginine biosynthesis; N(2)-acetyl-L-ornithine from L-glutamate: step 2/4. Its function is as follows. Catalyzes the ATP-dependent phosphorylation of N-acetyl-L-glutamate. This chain is Acetylglutamate kinase, found in Bradyrhizobium diazoefficiens (strain JCM 10833 / BCRC 13528 / IAM 13628 / NBRC 14792 / USDA 110).